We begin with the raw amino-acid sequence, 70 residues long: Turripeptide OL179 (70 aa).

The signal sequence occupies residues 1–21 (MMAKQVVVLLALLLLLPIVTA). Residues 22–32 (SMGDASGRTGR) constitute a propeptide that is removed on maturation.

Expressed by the venom duct.

It localises to the secreted. Functionally, acts as a neurotoxin by inhibiting an ion channel. This is Turripeptide OL179 from Iotyrris olangoensis (Sea snail).